Here is a 104-residue protein sequence, read N- to C-terminus: uncharacterized protein (104 aa).

The helical transmembrane segment at 80–98 threads the bilayer; the sequence is GSSLPLFDLVFILLSTFFL.

The protein localises to the membrane. This is an uncharacterized protein from Saccharomyces cerevisiae (strain ATCC 204508 / S288c) (Baker's yeast).